The chain runs to 472 residues: MERKTVLVIADLGGCPPHMFYKSAAEKYNLVSFIPRPFAITASHAALIEKYSVAVIKDKDYFKSLADFEHPDSIYWAHEDHDKPEEEVVEEIVKVAGMFAVDAITTNNELFIAPMAKACERLGLRGAGVQAAENARDKNKMRAAFNRAGVKSIKNKRVTTLEDFRAALQEIGTPLILKPTYLASSIGVTLIKEMETAEAEFNRVNEYLKSINVPKAVTFEAPFIAEEFLQGEYDDWYETSGYSDYISIEGIMADGEYFPVAIHDKTPQIGFTETSHITPSILDDDAKRKIVEAAKKANEGLGLENCATHTEIKLMKNREAGLIESAARFAGWNMIPNIKKVFGVDMAQLLLDVLCFGKEADLPKGLLEQEPCYVADCHLYPQHFKENGQLPETAVDFVIESIDIPDGVLKGDTEIVSFSAAEAGTSVDLRLFEAFNSIAAFELKGSNSGDVAESIKQIQQQAKLTAKYALPV.

Position 109 (E109) interacts with Mg(2+). 2 residues coordinate ATP: K138 and K178. The 214-residue stretch at 142–355 (RAAFNRAGVK…MAQLLLDVLC (214 aa)) folds into the ATP-grasp domain. Position 182 (L182) interacts with Mg(2+). ATP contacts are provided by residues 184–185 (SS), 226–229 (EEFL), and Q268. Residues E273 and 309–311 (HTE) each bind substrate. Residues E311 and E324 each contribute to the Mg(2+) site. 328–331 (RFAG) contacts substrate.

As to quaternary structure, monomer or homodimer. It depends on Mg(2+) as a cofactor.

It carries out the reaction L-anticapsin + L-alanine + ATP = bacilysin + ADP + phosphate + H(+). Its pathway is antibiotic biosynthesis; bacilysin biosynthesis. Part of the bacABCDEFG operon responsible for the biosynthesis of bacilysin, an irreversible inactivator of the glutaminase domain of glucosamine synthetase. Catalyzes the formation of alpha-dipeptides from various L-amino acids in the presence of ATP. In vivo catalyzes the ligation of L-alanine and L-anticapsin (epoxycyclohexanonyl-Ala) to produce the final bacilysin antibiotic (L-Ala-L-4S-cyclohexenonyl-Ala dipeptide). This Bacillus subtilis protein is Alanine--anticapsin ligase.